The chain runs to 141 residues: MRHGVAGRKLGVTSSHRAAMFRNMAVALIKHEQITTTLPKAKELRPVVEKLITLGKRGDLHARRQAYAQLRDDVIVSKLFSAVADRYKARNGGYIRVLKAGIRHGDAADMAVIELVDRDVAAKGQDSGPRPEAAAEDSLAA.

This sequence belongs to the bacterial ribosomal protein bL17 family. As to quaternary structure, part of the 50S ribosomal subunit. Contacts protein L32.

This chain is Large ribosomal subunit protein bL17, found in Gluconacetobacter diazotrophicus (strain ATCC 49037 / DSM 5601 / CCUG 37298 / CIP 103539 / LMG 7603 / PAl5).